The primary structure comprises 61 residues: Small ribosomal subunit protein uS14 (61 aa).

The Zn(2+) site is built by C24, C27, C40, and C43.

This sequence belongs to the universal ribosomal protein uS14 family. Zinc-binding uS14 subfamily. As to quaternary structure, part of the 30S ribosomal subunit. Contacts proteins S3 and S10. It depends on Zn(2+) as a cofactor.

In terms of biological role, binds 16S rRNA, required for the assembly of 30S particles and may also be responsible for determining the conformation of the 16S rRNA at the A site. This is Small ribosomal subunit protein uS14 from Halothermothrix orenii (strain H 168 / OCM 544 / DSM 9562).